We begin with the raw amino-acid sequence, 118 residues long: Beta-2-microglobulin (118 aa).

The signal sequence occupies residues 1 to 20 (MAPLVALVLLGLLSLSGLDA). Positions 25 to 112 (PKVQVYSRHP…HVTLDKPKIV (88 aa)) constitute an Ig-like C1-type domain. A disulfide bridge connects residues cysteine 45 and cysteine 99.

The protein belongs to the beta-2-microglobulin family. In terms of assembly, heterodimer of an alpha chain and a beta chain. Beta-2-microglobulin is the beta-chain of major histocompatibility complex class I molecules.

It is found in the secreted. Component of the class I major histocompatibility complex (MHC). Involved in the presentation of peptide antigens to the immune system. In Sus scrofa (Pig), this protein is Beta-2-microglobulin (B2M).